Here is a 379-residue protein sequence, read N- to C-terminus: Stimulator of interferon genes protein (379 aa).

3 consecutive transmembrane segments (helical) span residues 20 to 40 (VAAF…GEPS), 87 to 107 (ACLG…YFYV), and 115 to 135 (LPLT…ILLG). S-palmitoyl cysteine attachment occurs at residues cysteine 88 and cysteine 91. The tract at residues 153 to 340 (FNVAHGLAWS…KHLRQEEREE (188 aa)) is cyclic dinucleotide-binding domain (CBD). The 2',3'-cGAMP site is built by serine 162, tyrosine 167, arginine 238, and threonine 263. 3',3'-c-di-GMP is bound by residues serine 162, tyrosine 167, 238–241 (RVYT), and threonine 263. 2',3'-cUAMP is bound by residues tyrosine 167, arginine 238, and threonine 263. The tract at residues 340-379 (EVTMGTAGTFVAPGSSTLHQEPELLISGMDQPLPLRTDIF) is C-terminal tail (CTT). Serine 355 is modified (phosphoserine). Threonine 356 carries the post-translational modification Phosphothreonine. Residues 363 to 366 (LLIS) carry the pLxIS motif motif. Serine 366 carries the phosphoserine; by TBK1 modification.

Belongs to the STING family. Homodimer; forms a homodimer in absence of cyclic nucleotide (c-di-GMP or cGAMP). Homotetramer; in presence of cyclic nucleotide (c-di-GMP or cGAMP), forms tetramers and higher-order oligomers through side-by-side packing. Interacts (when phosphorylated) with IRF3; following activation and phosphorylation on the pLxIS motif by TBK1, recruits IRF3. Interacts with TBK1; when homodimer, leading to subsequent production of IFN-beta. Interacts (via transmembrane domain) with TMEM203. In terms of processing, phosphorylation by TBK1 leads to activation and production of IFN-beta. Following cyclic nucleotide (c-di-GMP or cGAMP)-binding, activation and translocation from the endoplasmic reticulum, STING1 is phosphorylated by TBK1 at Ser-366 in the pLxIS motif. The phosphorylated pLxIS motif constitutes an IRF3-binding motif, leading to recruitment of the transcription factor IRF3 to induce type-I interferons and other cytokines. In contrast, lacks phosphorylation site at position 358, leading to reduced production of type-I interferons and other cytokines.

Its subcellular location is the endoplasmic reticulum membrane. It is found in the cytoplasm. The protein resides in the perinuclear region. The protein localises to the endoplasmic reticulum-Golgi intermediate compartment membrane. It localises to the golgi apparatus membrane. Its subcellular location is the cytoplasmic vesicle. It is found in the autophagosome membrane. The protein resides in the mitochondrion outer membrane. The protein localises to the cell membrane. It catalyses the reaction H(+)(in) = H(+)(out). Functionally, facilitator of innate immune signaling that acts as a sensor of cytosolic DNA from bacteria and viruses and promotes low production of type I interferon (IFN-alpha and IFN-beta). Compared to other mammals, STING1-dependent type I interferon induction is strongly reduced in bats, suggesting that the cGAS-STING pathway promotes a limited inflammatory response. Innate immune response is triggered in response to non-CpG double-stranded DNA from viruses and bacteria delivered to the cytoplasm. Acts by binding cyclic dinucleotides: recognizes and binds cyclic di-GMP (c-di-GMP), a second messenger produced by bacteria, cyclic UMP-AMP (2',3'-cUAMP), and cyclic GMP-AMP (cGAMP), a messenger produced by CGAS in response to DNA virus in the cytosol. Upon binding to c-di-GMP, cUAMP or cGAMP, STING1 oligomerizes, translocates from the endoplasmic reticulum and is phosphorylated by TBK1 on the pLxIS motif, leading to recruitment and subsequent activation of the transcription factor IRF3 to induce expression of type I interferon and exert a potent anti-viral state. In addition to promote the production of type I interferons, plays a direct role in autophagy. Following cGAMP-binding, STING1 buds from the endoplasmic reticulum into COPII vesicles, which then form the endoplasmic reticulum-Golgi intermediate compartment (ERGIC). The ERGIC serves as the membrane source for WIPI2 recruitment and LC3 lipidation, leading to formation of autophagosomes that target cytosolic DNA or DNA viruses for degradation by the lysosome. Promotes autophagy by acting as a proton channel that directs proton efflux from the Golgi to facilitate MAP1LC3B/LC3B lipidation. The autophagy- and interferon-inducing activities can be uncoupled and autophagy induction is independent of TBK1 phosphorylation. This is Stimulator of interferon genes protein from Eidolon helvum (Straw-colored fruit bat).